Here is a 218-residue protein sequence, read N- to C-terminus: uncharacterized protein (218 aa).

Positions 57, 59, 61, 62, 138, 158, and 199 each coordinate Zn(2+).

This sequence belongs to the metallo-beta-lactamase superfamily. Glyoxalase II family. The cofactor is Zn(2+).

This is an uncharacterized protein from Mycobacterium leprae (strain TN).